We begin with the raw amino-acid sequence, 180 residues long: UDP-4-amino-4,6-dideoxy-N-acetyl-beta-L-altrosamine N-acetyltransferase (180 aa).

The 157-residue stretch at 13–169 (IDFTNLNDGE…IDVLLYYKDK (157 aa)) folds into the N-acetyltransferase domain.

The catalysed reaction is UDP-4-amino-4,6-dideoxy-N-acetyl-beta-L-altrosamine + acetyl-CoA = UDP-2,4-diacetamido-2,4,6-trideoxy-beta-L-altrose + CoA + H(+). Functionally, catalyzes the third step in the biosynthesis of pseudaminic acid, a sialic-acid-like sugar that is used to modify flagellin. Mediates N-4 acetylation of UDP-4-amino-4,6-dideoxy-beta-L-AltNAc to form UDP-2,4-diacetamido-2,4,6-trideoxy-beta-L-altropyranose. The sequence is that of UDP-4-amino-4,6-dideoxy-N-acetyl-beta-L-altrosamine N-acetyltransferase (pseH) from Helicobacter pylori (strain ATCC 700392 / 26695) (Campylobacter pylori).